The following is a 438-amino-acid chain: Methylenetetrahydrofolate--tRNA-(uracil-5-)-methyltransferase TrmFO (438 aa).

10–15 (GGGLAG) is a binding site for FAD.

It belongs to the MnmG family. TrmFO subfamily. FAD is required as a cofactor.

It localises to the cytoplasm. The catalysed reaction is uridine(54) in tRNA + (6R)-5,10-methylene-5,6,7,8-tetrahydrofolate + NADH + H(+) = 5-methyluridine(54) in tRNA + (6S)-5,6,7,8-tetrahydrofolate + NAD(+). It catalyses the reaction uridine(54) in tRNA + (6R)-5,10-methylene-5,6,7,8-tetrahydrofolate + NADPH + H(+) = 5-methyluridine(54) in tRNA + (6S)-5,6,7,8-tetrahydrofolate + NADP(+). In terms of biological role, catalyzes the folate-dependent formation of 5-methyl-uridine at position 54 (M-5-U54) in all tRNAs. The protein is Methylenetetrahydrofolate--tRNA-(uracil-5-)-methyltransferase TrmFO of Trichormus variabilis (strain ATCC 29413 / PCC 7937) (Anabaena variabilis).